We begin with the raw amino-acid sequence, 555 residues long: MNCKAVTISLLLLLFLTRVYIQPTFSLISDCDETFNYWEPLNLLVRGFGKQTWEYSPEYSIRSWAFLLPFYCILYPVNKFTDLESHWNFFITRACLGFFSFIMEFKLHREIAGSLALQIANIWIIFQLFNPGWFHASVELLPSAVAMLLYVGATRHSLRYLSTGSTSNFTKSLAYNFLASILGWPFVLILSLPLCLHYLFNHRIISTIRTAFDCCLIFSLTAFAVIVTDSIFYGKLAPVSWNILFYNVINASEESGPNIFGVEPWYYYPLNLLLNFPLPVLVLAILGIFHLRLWPLWASLFTWIAVFTQQPHKEERFLYPIYGLITLSASIAFYKVLNLFNRKPILKKGIKLSVLLIVAGQAMSRIVALVNNYTAPIAVYEQFSSLNQGGVKAPVVNVCTGREWYHFPSSFLLPDNHRLKFVKSGFDGLLPGDFPESGSIFKKIRTLPKGMNNKNIYDTGKEWPITRCDYFIDIVAPINLTKDVFNPLHLMDNWNKLACAAFIDGENSKILGRAFYVPEPINRIMQIVLPKQWNQVYGVRYIDYCLFEKPTETTN.

The Cytoplasmic segment spans residues 1 to 7 (MNCKAVT). The helical transmembrane segment at 8–28 (ISLLLLLFLTRVYIQPTFSLI) threads the bilayer. Residues 29-62 (SDCDETFNYWEPLNLLVRGFGKQTWEYSPEYSIR) lie on the Lumenal side of the membrane. Residues 63-83 (SWAFLLPFYCILYPVNKFTDL) traverse the membrane as a helical segment. The Cytoplasmic segment spans residues 84 to 86 (ESH). The chain crosses the membrane as a helical span at residues 87–107 (WNFFITRACLGFFSFIMEFKL). The Lumenal portion of the chain corresponds to 108 to 113 (HREIAG). The helical transmembrane segment at 114–134 (SLALQIANIWIIFQLFNPGWF) threads the bilayer. The Cytoplasmic portion of the chain corresponds to 135 to 176 (HASVELLPSAVAMLLYVGATRHSLRYLSTGSTSNFTKSLAYN). Residues 177 to 197 (FLASILGWPFVLILSLPLCLH) traverse the membrane as a helical segment. Topologically, residues 198 to 213 (YLFNHRIISTIRTAFD) are lumenal. Residues 214–234 (CCLIFSLTAFAVIVTDSIFYG) traverse the membrane as a helical segment. Over 235 to 268 (KLAPVSWNILFYNVINASEESGPNIFGVEPWYYY) the chain is Cytoplasmic. Residues 269–289 (PLNLLLNFPLPVLVLAILGIF) traverse the membrane as a helical segment. Residues 290–316 (HLRLWPLWASLFTWIAVFTQQPHKEER) are Lumenal-facing. The chain crosses the membrane as a helical span at residues 317-337 (FLYPIYGLITLSASIAFYKVL). Over 338-349 (NLFNRKPILKKG) the chain is Cytoplasmic. Residues 350-370 (IKLSVLLIVAGQAMSRIVALV) traverse the membrane as a helical segment. Over 371–555 (NNYTAPIAVY…LFEKPTETTN (185 aa)) the chain is Lumenal.

It belongs to the glycosyltransferase 22 family.

It localises to the endoplasmic reticulum membrane. The catalysed reaction is an alpha-D-Man-(1-&gt;2)-alpha-D-Man-(1-&gt;2)-alpha-D-Man-(1-&gt;3)-[alpha-D-Man-(1-&gt;3)-alpha-D-Man-(1-&gt;6)]-beta-D-Man-(1-&gt;4)-beta-D-GlcNAc-(1-&gt;4)-alpha-D-GlcNAc-diphospho-di-trans,poly-cis-dolichol + a di-trans,poly-cis-dolichyl beta-D-mannosyl phosphate = an alpha-D-Man-(1-&gt;2)-alpha-D-Man-(1-&gt;2)-alpha-D-Man-(1-&gt;3)-[alpha-D-Man-(1-&gt;2)-alpha-D-Man-(1-&gt;3)-alpha-D-Man-(1-&gt;6)]-beta-D-Man-(1-&gt;4)-beta-D-GlcNAc-(1-&gt;4)-alpha-D-GlcNAc-diphospho-di-trans,poly-cis-dolichol + a di-trans,poly-cis-dolichyl phosphate + H(+). It catalyses the reaction an alpha-D-Man-(1-&gt;2)-alpha-D-Man-(1-&gt;2)-alpha-D-Man-(1-&gt;3)-[alpha-D-Man-(1-&gt;2)-alpha-D-Man-(1-&gt;3)-[alpha-D-Man-(1-&gt;6)]-alpha-D-Man-(1-&gt;6)]-beta-D-Man-(1-&gt;4)-beta-D-GlcNAc-(1-&gt;4)-alpha-D-GlcNAc-diphospho-di-trans,poly-cis-dolichol + a di-trans,poly-cis-dolichyl beta-D-mannosyl phosphate = an alpha-D-Man-(1-&gt;2)-alpha-D-Man-(1-&gt;2)-alpha-D-Man-(1-&gt;3)-[alpha-D-Man-(1-&gt;2)-alpha-D-Man-(1-&gt;3)-[alpha-D-Man-(1-&gt;2)-alpha-D-Man-(1-&gt;6)]-alpha-D-Man-(1-&gt;6)]-beta-D-Man-(1-&gt;4)-beta-D-GlcNAc-(1-&gt;4)-alpha-D-GlcNAc-diphospho-di-trans,poly-cis-dolichol + a di-trans,poly-cis-dolichyl phosphate + H(+). Its pathway is protein modification; protein glycosylation. In terms of biological role, mannosyltransferase that operates in the biosynthetic pathway of dolichol-linked oligosaccharides, the glycan precursors employed in protein asparagine (N)-glycosylation. The assembly of dolichol-linked oligosaccharides begins on the cytosolic side of the endoplasmic reticulum membrane and finishes in its lumen. The sequential addition of sugars to dolichol pyrophosphate produces dolichol-linked oligosaccharides containing fourteen sugars, including two GlcNAcs, nine mannoses and three glucoses. Once assembled, the oligosaccharide is transferred from the lipid to nascent proteins by oligosaccharyltransferases. In the lumen of the endoplasmic reticulum, catalyzes the addition of the seventh and ninth alpha-1,2-linked mannose residues to Man(6)GlcNAc(2)-PP-dolichol and Man(8)GlcNAc(2)-PP-dolichol respectively. This is Alpha-1,2-mannosyltransferase ALG9 (ALG9) from Saccharomyces cerevisiae (strain ATCC 204508 / S288c) (Baker's yeast).